A 696-amino-acid chain; its full sequence is Chitin synthase regulator SKT5 (696 aa).

Disordered regions lie at residues 37 to 67 (GQDF…SANQ) and 90 to 145 (QEED…IKKR). The segment covering 41–53 (SDNKENRENRDNE) has biased composition (basic and acidic residues). Positions 104 to 126 (LNNSNNTSLSSLGSTPTNSPSPG) are enriched in low complexity. The segment covering 129-139 (RQTNSSTSLTK) has biased composition (polar residues). At Ser-148 the chain carries Phosphoserine. Sel1-like repeat units follow at residues 271–306 (SDAQ…KHGH), 307–342 (IESA…SRNH), 343–382 (PSAM…ARAN), 386–423 (AAAP…SLGH), 424–460 (VPSA…LKGD), 461–498 (SVAM…NAGL), and 499–534 (PKAQ…GNED). Phosphoserine is present on residues Ser-561 and Ser-563. Phosphothreonine is present on Thr-564. Composition is skewed to polar residues over residues 576–593 (SNVG…TFFT), 605–634 (LQIN…SSAK), and 651–661 (VSLSNMGSSNM). The segment at 576–696 (SNVGSNSRVS…GKKKKDCVIM (121 aa)) is disordered. Basic and acidic residues predominate over residues 662 to 675 (IRKDFPAVKTESKK). The segment covering 680–696 (KNKKDKQGKKKKDCVIM) has biased composition (basic residues). Cys-693 is modified (cysteine methyl ester). Cys-693 is lipidated: S-farnesyl cysteine. Positions 694–696 (VIM) are cleaved as a propeptide — removed in mature form.

It belongs to the SKT5 family. May interact with CHS3 and seems to be an adapter (along with BNI4) to link CHS3 to septins. Post-translationally, farnesylation is required for chitin synthase CHS3 activity but is not required for SKT5 membrane association.

It localises to the cell membrane. Functionally, activator of the chitin synthase CHS3 which polymerizes chitin, a structural polymer of the fungal cell wall. The chain is Chitin synthase regulator SKT5 from Saccharomyces cerevisiae (strain ATCC 204508 / S288c) (Baker's yeast).